The following is a 721-amino-acid chain: VKIVVERDPIKTSFEKWAKPGHFSRTLAKGPNTTTWIWNLHADAHDFDSHTNDLEEISRKVFSAHFGQLAIILIWLSGMYFHGARFSNYEAWLSDPTRIKPSAQVVWPIVGQEILNGDVGGGFRGIQITSGFFQIWRASGITSELQLYCTAIGALIFAALMLFAGWFHYHKAAPKLAWFQDVESMLNHHLAGLLGLGSLSWAGHQVHVSLPINQLLDAGVDPKEIPLPHEFISNRDLVAQLYPSFAKGLTPFFALNWSEYSEFLTFRGGLNPVTGGLWLTDTAHHHLAIAILFLIAGHMYRTNWGIGHSLKEILEAHKGPFTGEGHKGIYEILTTSWHAQLALNLAMLGSLTIVVAHHMYSMPPYPYLAIDYGTQLSLFTHHMWIRGFLIVGAAAHAAIFMVRDYDPTIQYNNLLDRVLRHRDAIVSHLNWACIFLGFHSFGLYIHNDTMSALGRPQDMFSDTAIQLQPIFAQWIQNTHASAPSSTAPGAAASTSLTWGGGDLLAVGGKVALLPIPLGTADFLVHHIHAFTIHVTVLILLKGVLFARSSRLIPDKANLGFRFPCDGPGRGGTCQVSAWDHVFLGLFWMYNAISVVIFHFSWKMQSDVWGSISDRGVVTHITGGNFAQSSITINGWLRDFLWAQASQVIQSYGSSLSAYGLFFLGAHFVWAFSLMFLFSGRGYWQELIESIVWAHNKLKVAPAIQPRALSIVQGRAVGVAHY.

Transmembrane regions (helical) follow at residues 61-84 (VFSA…FHGA), 147-170 (LYCT…FHYH), 186-210 (LNHH…HVSL), 282-300 (TAHH…GHMY), 337-360 (WHAQ…HHMY), 376-402 (LSLF…IFMV), 424-446 (AIVS…LYIH), and 522-540 (FLVH…LILL). [4Fe-4S] cluster-binding residues include C564 and C573. 2 consecutive transmembrane segments (helical) span residues 580–601 (HVFL…HFSW) and 655–677 (LSAY…MFLF). A chlorophyll a'-binding site is contributed by H666. Chlorophyll a contacts are provided by M674 and Y682. W683 contacts phylloquinone. Residues 715–721 (AVGVAHY) traverse the membrane as a helical segment.

Belongs to the PsaA/PsaB family. As to quaternary structure, the PsaA/B heterodimer binds the P700 chlorophyll special pair and subsequent electron acceptors. PSI consists of a core antenna complex that captures photons, and an electron transfer chain that converts photonic excitation into a charge separation. The eukaryotic PSI reaction center is composed of at least 11 subunits. Requires P700 is a chlorophyll a/chlorophyll a' dimer, A0 is one or more chlorophyll a, A1 is one or both phylloquinones and FX is a shared 4Fe-4S iron-sulfur center. as cofactor.

Its subcellular location is the plastid. It localises to the chloroplast thylakoid membrane. The enzyme catalyses reduced [plastocyanin] + hnu + oxidized [2Fe-2S]-[ferredoxin] = oxidized [plastocyanin] + reduced [2Fe-2S]-[ferredoxin]. Its function is as follows. PsaA and PsaB bind P700, the primary electron donor of photosystem I (PSI), as well as the electron acceptors A0, A1 and FX. PSI is a plastocyanin-ferredoxin oxidoreductase, converting photonic excitation into a charge separation, which transfers an electron from the donor P700 chlorophyll pair to the spectroscopically characterized acceptors A0, A1, FX, FA and FB in turn. Oxidized P700 is reduced on the lumenal side of the thylakoid membrane by plastocyanin. This Ginkgo biloba (Ginkgo) protein is Photosystem I P700 chlorophyll a apoprotein A1.